Consider the following 1201-residue polypeptide: MRRRARSIRFSSDDNEDNEEDDDYYSNAHSEKSEDHSNHIKVSHFDPSSYKQKLVSVRETQRNRKFSSLQKHLNTETPSFSVSIENPSKPSAAFNDASLGKKSTEHQIDGIRNGSSNLQMEGNDKELDTDNNEDESTTFKDEEDDLISPKSYLTSSKTFSYPKAPTESTNGDYLDEDYVDGQSDPESSNASDSDFADSPDDLTKVRSPIPSRRGRRKRKMRGPILPVKKNLRVKKAMSPLRAERNSPDFRRKLRSRDNRPNYHLFDYYNEIASSPNPSTTKITYNPPKLPMKDFATLPIGYQSTCDSDETSELSSTSSEQTSDVEGLNAYNNLGASSDIENAPSSQLHFGHIDEKTIRSTDPFANRENLDFNSIGGLEDIILQLKEMVMLPLLYPEVFLHLHITPPRGVLFHGPPGTGKTLMARVLAANCSTKNQKISFFLRKGSDCLSKWVGEAERQLRLLFEEARRVQPSIIFFDEIDGLAPIRSSKQEQTHSSIVSTLLALMDGLDTRGQVVVIGATNRPNDLDPALRRPGRFDREFYFPLPNKQARMKILEINSLHFSPKIPESYLLHLAESTSGYGGADLKALCTEAALNAVRRTFPQIYTSSDKFLIDLNEISVSICDFVVASEKIAVSTRRSDVKPNIPITDSHKILFKKSIEVITSKIRRLLKLDVYLPTVESLQKLPAEELMRQKEINSLKTTMSFRPRLLITDIYGYGCTYLSKVLFSMLDGIHVQSLDISELLMDTTTSPRSLLTKIFSEARKNAPSIIFINNVEKWPSLFSHSFLSMFLLLLDSISPLEPVMLLGFANTNQEKLSSTVRSWFPSHRSEYHDLSFPDYSSRYSFFHYLLKRISFLPIHQKSAEAASVDILPKVLPVSKTSDLTDKVNRRQRKNDKKIKNKIQVKLSSILEMLRSRYKKFKKPIIDLNDIYIDESNERVVKGKSKDNFEYFLSGNTVTRKKDNACFKMMNFEEIERRLWSGRYCTPKEFLRDIKMIKQDAILSGDVNLKHKAKEMFAHAELNVDELIDAKLLYDCCQVSKREKAYKQLKQKKLNNAKDAHEMQESKNEETFVRNDVAQEDNFIELSSNEVRNVSNDEHKHTLFHGQSLTHNNLIAVTPPSRTGVEHKEENKKYDNVNIQKTLAKCAEEFAEHTNFNKVELLDFVYSKLSSTIWENREEHDLLKIVRDVRQTFFRSLEDMGV.

2 disordered regions span residues 1–223 and 305–324; these read MRRR…MRGP and CDSDETSELSSTSSEQTSDV. Over residues 13-24 the composition is skewed to acidic residues; the sequence is DDNEDNEEDDDY. Residues 29–38 show a composition bias toward basic and acidic residues; the sequence is HSEKSEDHSN. A compositionally biased stretch (polar residues) spans 66–89; sequence FSSLQKHLNTETPSFSVSIENPSK. Over residues 129 to 146 the composition is skewed to acidic residues; the sequence is TDNNEDESTTFKDEEDDL. The span at 212-221 shows a compositional bias: basic residues; that stretch reads RRGRRKRKMR. Residues 312 to 323 show a composition bias toward low complexity; that stretch reads ELSSTSSEQTSD. ATP is bound at residue 413 to 420; the sequence is GPPGTGKT. Positions 897–1026 constitute a Bromo domain; that stretch reads KIKNKIQVKL…AHAELNVDEL (130 aa).

It belongs to the AAA ATPase family.

The protein localises to the nucleus. It carries out the reaction ATP + H2O = ADP + phosphate + H(+). Probable ATPase which may play a role in nucleosome organization. The polypeptide is ATPase with bromodomain protein abo2 (Schizosaccharomyces pombe (strain 972 / ATCC 24843) (Fission yeast)).